We begin with the raw amino-acid sequence, 485 residues long: MSSPLASLSKTRKVPLESEPVNPGRRGIRIYGDEDEVDMVNDGQDSEEKISLPSCYGGIGRQGLMIHDSELLTSMARKLQELEQQLKARNEEMLSKEQKILALEDLVQTLQQHQSSTTREEELETQCIQLQRQVGEMERFLNDYGLQWVGEPMDQENSEGKIISESDERDWMKAKKFWKPGDSIVPPEVDFDRLLSSLQDLSELVVEGEAQVTPVPGGAQFRTLEPIPLKLYRNGIMMFDGPFRPFYDPYTQRCLRDILDGFFPSELQRLYPDGVPFKVSDLRNQVYPEDGLGPFPGEGRVVGRQKIRKVTDRVEETSGSRMTAEKFLNRLPKCVIRQGEVIDIRGPIRDTLQNCCPMPVRIQEIIVETPALASERQRTQESPNMPVPPLSMLRIKSENGEQAFLLMMRPEDTIGDVRNLLAQARDMDSAAFEILSTFPPTVYRDDTVTLQAAGLVPNATLLLRTRRVLPANPSFGTDSGPGSLP.

The segment at 1–26 (MSSPLASLSKTRKVPLESEPVNPGRR) is disordered. A coiled-coil region spans residues 67–143 (HDSELLTSMA…VGEMERFLND (77 aa)). An SEP domain is found at 224 to 288 (LEPIPLKLYR…VSDLRNQVYP (65 aa)). A UBX domain is found at 386–463 (PVPPLSMLRI…GLVPNATLLL (78 aa)). Phosphoserine occurs at positions 479 and 483.

Interacts with GNA12, GNA13, RND1, RND2 and RND3. In terms of tissue distribution, strongly expressed in testis. Also expressed in lung, brain and thymus.

Its subcellular location is the cytoplasm. It is found in the cytoskeleton. Its function is as follows. May be involved in the reorganization of actin cytoskeleton mediated by RND1, RND2 and RND3. Promotes RHOA activation mediated by GNA12 and GNA13. This is UBX domain-containing protein 11 (Ubxn11) from Rattus norvegicus (Rat).